The sequence spans 514 residues: 2,3-bisphosphoglycerate-independent phosphoglycerate mutase (514 aa).

Mn(2+) contacts are provided by Asp-12 and Ser-62. Catalysis depends on Ser-62, which acts as the Phosphoserine intermediate. Substrate is bound by residues His-123, 153–154, Arg-185, Arg-191, 260–263, and Lys-335; these read RD and RPDR. Asp-402, His-406, Asp-443, His-444, and His-462 together coordinate Mn(2+).

Belongs to the BPG-independent phosphoglycerate mutase family. Monomer. Requires Mn(2+) as cofactor.

The catalysed reaction is (2R)-2-phosphoglycerate = (2R)-3-phosphoglycerate. It participates in carbohydrate degradation; glycolysis; pyruvate from D-glyceraldehyde 3-phosphate: step 3/5. Its function is as follows. Catalyzes the interconversion of 2-phosphoglycerate and 3-phosphoglycerate. This Lachnoclostridium phytofermentans (strain ATCC 700394 / DSM 18823 / ISDg) (Clostridium phytofermentans) protein is 2,3-bisphosphoglycerate-independent phosphoglycerate mutase.